The following is a 584-amino-acid chain: Galectin-3-binding protein (584 aa).

Residues 1–18 (MTPPRLFWVWLLVAGTQG) form the signal peptide. Positions 24-124 (MRLADGGATN…HERDAGVVCT (101 aa)) constitute an SRCR domain. 3 cysteine pairs are disulfide-bonded: Cys-49–Cys-113, Cys-62–Cys-123, and Cys-93–Cys-103. The N-linked (GlcNAc...) asparagine glycan is linked to Asn-69. Residues Asn-125 and Asn-192 are each glycosylated (N-linked (GlcNAc...) asparagine). One can recognise a BTB domain in the interval 153 to 221 (CDLSISVNVQ…FYSRRIDITL (69 aa)). The region spanning 260–359 (PLDLYAYAVA…MLPEELFELQ (100 aa)) is the BACK domain. 4 N-linked (GlcNAc...) asparagine glycosylation sites follow: Asn-361, Asn-397, Asn-550, and Asn-579.

Homodimers and homomultimers. The multimers form ring-like structures with a diameter of 30-40 nm. Binds LGALS1 and LGALS3. Binds ITGB1, COL4A1, COL5A1, COL6A1, FN1 and NID. Interacts with the gamma-tubulin ring complex (gamma-TuRC), composed of gamma-tubulin, TUBGCP2, TUBGCP3, TUBGCP4, TUBGCP5 and TUBGCP6. The unglycosylated form interacts with PDE4DIP; this interaction, which is PDE4DIP isoform-specific, may connect a pericentrosomal complex, made of AKAP9, CDK5RAP2, EB1/MAPRE1 and PDE4DIP, to the gamma-tubulin ring complex (gamma-TuRC) to promote microtubule assembly and acetylation.

It localises to the secreted. Its subcellular location is the extracellular space. The protein resides in the extracellular matrix. Its function is as follows. Promotes integrin-mediated cell adhesion. May stimulate host defense against viruses and tumor cells. This is Galectin-3-binding protein (LGALS3BP) from Pongo abelii (Sumatran orangutan).